Reading from the N-terminus, the 277-residue chain is Large ribosomal subunit protein uL2 (277 aa).

The interval 222–277 (GVAMNPVDHPHGGGEGRTSGGRHPVTPWGKPTKGKKTRSNKATDKFIMRSRHQRKK) is disordered.

This sequence belongs to the universal ribosomal protein uL2 family. As to quaternary structure, part of the 50S ribosomal subunit. Forms a bridge to the 30S subunit in the 70S ribosome.

In terms of biological role, one of the primary rRNA binding proteins. Required for association of the 30S and 50S subunits to form the 70S ribosome, for tRNA binding and peptide bond formation. It has been suggested to have peptidyltransferase activity; this is somewhat controversial. Makes several contacts with the 16S rRNA in the 70S ribosome. The sequence is that of Large ribosomal subunit protein uL2 from Brucella canis (strain ATCC 23365 / NCTC 10854 / RM-666).